The primary structure comprises 117 residues: uncharacterized protein (117 aa).

The interval 16–56 (FSQSSDGRSNGGGSSSGDSVSTTSDGLLTTGTSPNTSSTSL) is disordered. Over residues 31 to 56 (SGDSVSTTSDGLLTTGTSPNTSSTSL) the composition is skewed to low complexity.

This is an uncharacterized protein from Saccharomyces cerevisiae (strain ATCC 204508 / S288c) (Baker's yeast).